Reading from the N-terminus, the 463-residue chain is Putative dipeptidase YtjP (463 aa).

Zn(2+) is bound at residue H85. D87 is an active-site residue. D116 contributes to the Zn(2+) binding site. The active-site Proton acceptor is E150. Zn(2+) contacts are provided by E151, D174, and H436.

The protein belongs to the peptidase M20A family. The cofactor is Zn(2+).

This Bacillus subtilis (strain 168) protein is Putative dipeptidase YtjP (ytjP).